The primary structure comprises 28 residues: Sarcolamban A (28 aa).

Residues 7-27 form a helical membrane-spanning segment; it reads LFTTFGILAILLFFLYLIYAV.

As to quaternary structure, interacts with SERCA. Strongly expressed in embryonic and larval somatic muscles and postembryonic heart.

It is found in the sarcoplasmic reticulum membrane. The protein resides in the cell membrane. It localises to the sarcolemma. The protein localises to the T-tubule. Functionally, plays an essential role in the regulation of calcium transport at the sarcoplasmic reticulum (SR), which is secondarily required for regular muscle contraction. In Drosophila melanogaster (Fruit fly), this protein is Sarcolamban A.